We begin with the raw amino-acid sequence, 363 residues long: MRDETPEQPAPLRFGYTTGSCASATSLAAARLLLTGVASDTVDIVLPKGQHVAMRLAFCRATDDGGAEAGTIKDAGDDPDVTHGALVFARVRLVHEPGVRFRAGPGVGTVTRAGLPIAVGEPAINPVPRRMMTEHLAALAAEHGYAGGFDVAIGVENGEALARKTMNPRLGIVGGLSILGTTGIVRPFSCSAYIASIHQGIDVARANGVTHIAACTGNASEDAVRARYGLPDIALIEMGDFAGAVLKYLRRASVARLTLCGGFGKLSKLAAGHLDLHSRHSSIDLPLLAEWAGEAGASAVLQHEIRAANTSQQALALALAHHVPLGDVVCAHARRVARDIVPGEVDVETLAIDREGRIVGVAP.

It belongs to the CbiD family.

The catalysed reaction is Co-precorrin-5B + S-adenosyl-L-methionine = Co-precorrin-6A + S-adenosyl-L-homocysteine. It participates in cofactor biosynthesis; adenosylcobalamin biosynthesis; cob(II)yrinate a,c-diamide from sirohydrochlorin (anaerobic route): step 6/10. Its function is as follows. Catalyzes the methylation of C-1 in cobalt-precorrin-5B to form cobalt-precorrin-6A. The protein is Cobalt-precorrin-5B C(1)-methyltransferase of Burkholderia pseudomallei (strain K96243).